Consider the following 247-residue polypeptide: Carboxy-S-adenosyl-L-methionine synthase (247 aa).

Residues Y39, 64–66 (GCS), 89–90 (DN), 117–118 (DI), N132, and R199 each bind S-adenosyl-L-methionine.

This sequence belongs to the class I-like SAM-binding methyltransferase superfamily. Cx-SAM synthase family. Homodimer.

The catalysed reaction is prephenate + S-adenosyl-L-methionine = carboxy-S-adenosyl-L-methionine + 3-phenylpyruvate + H2O. In terms of biological role, catalyzes the conversion of S-adenosyl-L-methionine (SAM) to carboxy-S-adenosyl-L-methionine (Cx-SAM). The protein is Carboxy-S-adenosyl-L-methionine synthase of Salmonella choleraesuis (strain SC-B67).